The following is a 504-amino-acid chain: L-amino-acid oxidase (504 aa).

The N-terminal stretch at 1–18 (MNVFFMFSLLFLAALGSC) is a signal peptide. Cys-28 and Cys-191 are oxidised to a cystine. Residues 61–62 (MS), 81–82 (EA), Arg-89, and 105–108 (GPMR) contribute to the FAD site. Substrate is bound at residue Arg-108. Asn-190 is a glycosylation site (N-linked (GlcNAc...) asparagine). His-241 serves as a coordination point for substrate. FAD is bound at residue Val-279. An intrachain disulfide couples Cys-349 to Cys-430. Asn-379 carries N-linked (GlcNAc...) asparagine glycosylation. Residue Tyr-390 participates in substrate binding. Residues Glu-475 and 482-487 (GWIDST) contribute to the FAD site. Substrate is bound at residue 482-483 (GW).

This sequence belongs to the flavin monoamine oxidase family. FIG1 subfamily. In terms of assembly, homodimer; non-covalently linked. FAD serves as cofactor. Expressed by the venom gland.

The protein localises to the secreted. The enzyme catalyses an L-alpha-amino acid + O2 + H2O = a 2-oxocarboxylate + H2O2 + NH4(+). It catalyses the reaction L-leucine + O2 + H2O = 4-methyl-2-oxopentanoate + H2O2 + NH4(+). In terms of biological role, catalyzes an oxidative deamination of predominantly hydrophobic and aromatic L-amino acids, thus producing hydrogen peroxide that may contribute to the diverse toxic effects of this enzyme. Shows activity on L-Leu. Exhibits diverse biological activities, such as hemorrhage, hemolysis, edema, antibacterial and antiparasitic activities, as well as regulation of platelet aggregation. Its effect on platelets is controversial, since it either induces aggregation or inhibits agonist-induced aggregation. These different effects are probably due to different experimental conditions. This protein induces apoptosis of cultured HeLa cells. The sequence is that of L-amino-acid oxidase from Gloydius halys (Chinese water mocassin).